The following is a 202-amino-acid chain: RYGSPTYFYAFYHHCQSLMKPAWSDAAHGDEVPYVFGVPMVGPTDLFPCNFSKNDVMLSAVVMTYWTNFAKTGDPNKPVPQDTKFIHTKANRFEEVAWSKYNPRDQLYLHIGLKPRVRDHYRATKVAFWKHLVPHLYNLHDMFHYTSTTTKVPLRIPPTAPTSPAGPMARPGAPSGQPSHLPTATRMPRGPGTGTRMQGHSW.

The Extracellular segment spans residues 1–202 (RYGSPTYFYA…TGTRMQGHSW (202 aa)). The cysteines at positions 15 and 49 are disulfide-linked. N-linked (GlcNAc...) asparagine glycosylation occurs at N50. Positions 154-202 (LRIPPTAPTSPAGPMARPGAPSGQPSHLPTATRMPRGPGTGTRMQGHSW) are disordered.

It belongs to the type-B carboxylesterase/lipase family. As to quaternary structure, homodimer, and heterodimer with NLGN1 and NLGN2. Interacts with neurexins NRXN1, NRXN2 and NRXN3. Interaction with neurexins is mediated by heparan sulfate glycan modification on neurexin. Interacts (via its C-terminus) with DLG4/PSD-95 (via PDZ domain 3).

It is found in the cell membrane. It localises to the synapse. Cell surface protein involved in cell-cell-interactions via its interactions with neurexin family members. Plays a role in synapse function and synaptic signal transmission, and probably mediates its effects by recruiting and clustering other synaptic proteins. May promote the initial formation of synapses, but is not essential for this. May also play a role in glia-glia or glia-neuron interactions in the developing peripheral nervous system. The sequence is that of Neuroligin-3 (NLGN3) from Macaca mulatta (Rhesus macaque).